A 448-amino-acid polypeptide reads, in one-letter code: RNA-binding protein 42 (448 aa).

Residues 1 to 29 (MAGAGPAPGLPGAGGPVVPGPGAGIPGKS) form a disordered region. The residue at position 2 (alanine 2) is an N-acetylalanine. Gly residues predominate over residues 11 to 27 (PGAGGPVVPGPGAGIPG). Serine 132 bears the Phosphoserine mark. Arginine 149 carries the asymmetric dimethylarginine modification. The segment at 204–448 (ELGLGLGLGL…QKEKKKLGLR (245 aa)) is necessary for interaction with HNRNPK. The tract at residues 286–324 (LSLRPRPRPPRPEPPPGLMALEVPEPLSEDKKKGKPEKL) is disordered. Over residues 313-324 (SEDKKKGKPEKL) the composition is skewed to basic and acidic residues. The 79-residue stretch at 349–427 (FRIFCGDLGN…RPIKLRKSMW (79 aa)) folds into the RRM domain.

This sequence belongs to the RRM RBM42 family. In terms of assembly, interacts with HNRNPK.

It is found in the nucleus. It localises to the cytoplasm. Binds (via the RRM domain) to the 3'-untranslated region (UTR) of CDKN1A mRNA. The protein is RNA-binding protein 42 (RBM42) of Bos taurus (Bovine).